We begin with the raw amino-acid sequence, 476 residues long: Ribulose bisphosphate carboxylase large chain (476 aa).

Substrate is bound by residues Asn-124 and Thr-174. Lys-176 serves as the catalytic Proton acceptor. Residue Lys-178 participates in substrate binding. Mg(2+) contacts are provided by Lys-202, Asp-204, and Glu-205. N6-carboxylysine is present on Lys-202. His-295 functions as the Proton acceptor in the catalytic mechanism. The substrate site is built by Arg-296, His-328, and Ser-380.

The protein belongs to the RuBisCO large chain family. Type I subfamily. In terms of assembly, heterohexadecamer of 8 large chains and 8 small chains; disulfide-linked. The disulfide link is formed within the large subunit homodimers. Mg(2+) is required as a cofactor. The disulfide bond which can form in the large chain dimeric partners within the hexadecamer appears to be associated with oxidative stress and protein turnover.

The protein resides in the carboxysome. The enzyme catalyses 2 (2R)-3-phosphoglycerate + 2 H(+) = D-ribulose 1,5-bisphosphate + CO2 + H2O. It carries out the reaction D-ribulose 1,5-bisphosphate + O2 = 2-phosphoglycolate + (2R)-3-phosphoglycerate + 2 H(+). In terms of biological role, ruBisCO catalyzes two reactions: the carboxylation of D-ribulose 1,5-bisphosphate, the primary event in carbon dioxide fixation, as well as the oxidative fragmentation of the pentose substrate in the photorespiration process. Both reactions occur simultaneously and in competition at the same active site. This chain is Ribulose bisphosphate carboxylase large chain, found in Trichodesmium erythraeum (strain IMS101).